The following is a 652-amino-acid chain: MTVTPRTGSRIEELLARSGRFFIPGEISADLRTVTRRGGRDGDVFYRDRWSHDKVVRSTHGVNCTGSCSWKIYVKDDIITWETQETDYPSVGPDRPEYEPRGCPRGAAFSWYTYSPTRVRHPYARGVLVEMYREAKARLGDPVAAWADIQADPRRRRRYQRARGKGGLVRVSWAEATEMIAAAHVHTISTYGPDRVAGFSPIPAMSMVSHAAGSRFVELIGGVMTSFYDWYADLPVASPQVFGDQTDVPESGDWWDVVWQCASVLLTYPNSRQLGTAEELLAHIDGPAADLLGRTVSELRRADPLTAATRYVDTFDLRGRATLYLTYWTAGDTRNRGREMLAFAQTYRSTDVAPPRGETPDFLPVVLEFAATVDPEAGRRLLSGYRVPIAALCNALTEAALPYAHTVAAVCRTGDMMGELFWTVVPYVTMTIVAVGSWWRYRYDKFGWTTRSSQLYESRLLRIASPMFHFGILVVIVGHGIGLVIPQSWTQAAGLSEGAYHVQAVVLGSIAGITTLAGVTLLIYRRRTRGPVFMATTVNDKVMYLVLVAAIVAGLGATALGSGVVGEAYNYRETVSVWFRSVWVLQPRGDLMAEAPLYYQIHVLIGLALFALWPFTRLVHAFSAPIGYLFRPYIIYRSREELVLTRPRRRGW.

The interval 1–251 (MTVTPRTGSR…FGDQTDVPES (251 aa)) is nitrate reductase alpha subunit. Positions 53–117 (DKVVRSTHGV…AFSWYTYSPT (65 aa)) constitute a 4Fe-4S Mo/W bis-MGD-type domain. Residues H60, C64, C68, and C103 each coordinate [4Fe-4S] cluster. Residue D233 coordinates Mo-bis(molybdopterin guanine dinucleotide). The segment at 258-415 (VWQCASVLLT…TVAAVCRTGD (158 aa)) is nitrate reductase delta subunit. A run of 5 helical transmembrane segments spans residues 416–436 (MMGE…VAVG), 466–486 (PMFH…LVIP), 504–524 (AVVL…LLIY), 545–565 (LVLV…SGVV), and 595–615 (APLY…LWPF). The tract at residues 416 to 652 (MMGELFWTVV…VLTRPRRRGW (237 aa)) is nitrate reductase gamma subunit. Heme b is bound by residues H469 and H479. 2 residues coordinate heme b: H602 and H620.

It in the N-terminal section; belongs to the nitrate reductase alpha subunit family. This sequence in the central section; belongs to the NarJ/NarW family. In the C-terminal section; belongs to the nitrate reductase gamma subunit family. Requires [4Fe-4S] cluster as cofactor. Mo-bis(molybdopterin guanine dinucleotide) is required as a cofactor. The cofactor is heme b.

Its subcellular location is the cell membrane. Does not seem to have nitrate reductase activity. In Mycobacterium tuberculosis (strain CDC 1551 / Oshkosh), this protein is Nitrate reductase-like protein NarX (narX).